The primary structure comprises 205 residues: Thymidine kinase (205 aa).

ATP is bound by residues 9 to 16 (SAMNAGKS) and 87 to 90 (DESQ). E88 acts as the Proton acceptor in catalysis. 4 residues coordinate Zn(2+): C145, C147, C182, and H185.

Belongs to the thymidine kinase family. In terms of assembly, homotetramer.

Its subcellular location is the cytoplasm. It catalyses the reaction thymidine + ATP = dTMP + ADP + H(+). This is Thymidine kinase from Salmonella choleraesuis (strain SC-B67).